The chain runs to 127 residues: Alpha-hordothionin (127 aa).

The signal sequence occupies residues 1–18; the sequence is MVCLLILGLVLEQVQVEG. Cystine bridges form between C21-C57, C22-C49, C30-C47, and C34-C43. The propeptide at 64–127 is acidic domain; the sequence is LALVSNSDEP…GDAGLTSLTA (64 aa).

This sequence belongs to the plant thionin (TC 1.C.44) family. 4 C-C subfamily.

The protein resides in the secreted. In terms of biological role, thionins are small plant proteins which are toxic to animal cells. They seem to exert their toxic effect at the level of the cell membrane. Their precise function is not known. The chain is Alpha-hordothionin (THI1.1) from Hordeum vulgare (Barley).